Consider the following 191-residue polypeptide: Elongation factor P (191 aa).

This sequence belongs to the elongation factor P family.

The protein resides in the cytoplasm. It participates in protein biosynthesis; polypeptide chain elongation. Its function is as follows. Involved in peptide bond synthesis. Stimulates efficient translation and peptide-bond synthesis on native or reconstituted 70S ribosomes in vitro. Probably functions indirectly by altering the affinity of the ribosome for aminoacyl-tRNA, thus increasing their reactivity as acceptors for peptidyl transferase. This is Elongation factor P from Bartonella henselae (strain ATCC 49882 / DSM 28221 / CCUG 30454 / Houston 1) (Rochalimaea henselae).